The following is a 342-amino-acid chain: Autoinducer 2 import system permease protein LsrC (342 aa).

Over M1–A13 the chain is Periplasmic. Residues L14–V34 traverse the membrane as a helical segment. Topologically, residues Q35–T38 are cytoplasmic. The helical transmembrane segment at M39–L59 threads the bilayer. Residues T60–S69 lie on the Periplasmic side of the membrane. The chain crosses the membrane as a helical span at residues I70 to V90. Over A91 to C92 the chain is Cytoplasmic. The helical transmembrane segment at V93–L113 threads the bilayer. Position 114 (K114) is a topological domain, periplasmic. A helical membrane pass occupies residues I115–W135. Over T136–P154 the chain is Cytoplasmic. Residues L155–W175 traverse the membrane as a helical segment. At L176–S212 the chain is on the periplasmic side. The chain crosses the membrane as a helical span at residues L213–L233. Residues N234–G251 lie on the Cytoplasmic side of the membrane. Residues G252–L272 traverse the membrane as a helical segment. Residues T273 to R283 are Periplasmic-facing. The chain crosses the membrane as a helical span at residues I284–D304. Residues G305–A342 are Cytoplasmic-facing.

It belongs to the binding-protein-dependent transport system permease family. AraH/RbsC subfamily. As to quaternary structure, the complex is composed of two ATP-binding proteins (LsrA), two transmembrane proteins (LsrC and LsrD) and a solute-binding protein (LsrB).

It is found in the cell inner membrane. Part of the ABC transporter complex LsrABCD involved in autoinducer 2 (AI-2) import. Probably responsible for the translocation of the substrate across the membrane. In Shigella flexneri, this protein is Autoinducer 2 import system permease protein LsrC (lsrC).